The sequence spans 640 residues: Sodium-dependent nutrient amino acid transporter 1 (640 aa).

Positions Met1–Asn13 are enriched in low complexity. A disordered region spans residues Met1 to Lys25. At Met1 to Asn30 the chain is on the cytoplasmic side. Residues Glu16–Lys25 are compositionally biased toward basic and acidic residues. 3 consecutive transmembrane segments (helical) span residues Trp31 to Val51, Gly64 to Leu84, and Thr117 to Val137. N-linked (GlcNAc...) asparagine glycans are attached at residues Asn174, Asn181, and Asn197. Transmembrane regions (helical) follow at residues Pro228–Met248, Ala257–Val277, Ala306–Ser326, Ile340–Leu360, Leu400–Leu420, Cys447–Val467, Thr473–Leu493, Cys515–Ile535, and Val551–Tyr571.

It belongs to the sodium:neurotransmitter symporter (SNF) (TC 2.A.22) family.

The protein localises to the membrane. Unusual broad substrate spectrum amino acid:sodium cotransporter that promotes absorption of the D isomers of essential amino acids. Neutral amino acids are the preferred substrates, especially methionine and phenylalanine. This Drosophila ananassae (Fruit fly) protein is Sodium-dependent nutrient amino acid transporter 1.